A 349-amino-acid chain; its full sequence is PhoH-like protein (349 aa).

147–154 (GPAGTGKT) is an ATP binding site.

Belongs to the PhoH family.

It localises to the cytoplasm. This is PhoH-like protein from Mycobacterium leprae (strain TN).